We begin with the raw amino-acid sequence, 577 residues long: 2-succinyl-5-enolpyruvyl-6-hydroxy-3-cyclohexene-1-carboxylate synthase (577 aa).

This sequence belongs to the TPP enzyme family. MenD subfamily. Homodimer. Mg(2+) is required as a cofactor. Requires Mn(2+) as cofactor. It depends on thiamine diphosphate as a cofactor.

The catalysed reaction is isochorismate + 2-oxoglutarate + H(+) = 5-enolpyruvoyl-6-hydroxy-2-succinyl-cyclohex-3-ene-1-carboxylate + CO2. Its pathway is quinol/quinone metabolism; 1,4-dihydroxy-2-naphthoate biosynthesis; 1,4-dihydroxy-2-naphthoate from chorismate: step 2/7. It participates in quinol/quinone metabolism; menaquinone biosynthesis. Its function is as follows. Catalyzes the thiamine diphosphate-dependent decarboxylation of 2-oxoglutarate and the subsequent addition of the resulting succinic semialdehyde-thiamine pyrophosphate anion to isochorismate to yield 2-succinyl-5-enolpyruvyl-6-hydroxy-3-cyclohexene-1-carboxylate (SEPHCHC). This Geobacillus kaustophilus (strain HTA426) protein is 2-succinyl-5-enolpyruvyl-6-hydroxy-3-cyclohexene-1-carboxylate synthase.